We begin with the raw amino-acid sequence, 468 residues long: H(+)/Cl(-) exchange transporter ClcA (468 aa).

Over methionine 1 to serine 32 the chain is Cytoplasmic. Residues phenylalanine 33–lysine 69 traverse the membrane as a helical segment. Topologically, residues serine 70–leucine 76 are periplasmic. A helical transmembrane segment spans residues proline 77 to phenylalanine 100. The Selectivity filter part_1 motif lies at glycine 106–proline 110. Serine 107 is a binding site for chloride. The segment at residues isoleucine 109–methionine 116 is an intramembrane region (helical). Residues aspartate 117–arginine 123 lie on the Cytoplasmic side of the membrane. 2 consecutive transmembrane segments (helical) span residues tryptophan 124–serine 141 and glutamate 148–phenylalanine 166. A Selectivity filter part_2 motif is present at residues glycine 146–proline 150. Residues arginine 167–serine 176 are Cytoplasmic-facing. 2 intramembrane regions (helical) span residues leucine 177–alanine 189 and proline 193–valine 201. Residues glutamate 202–serine 214 are Cytoplasmic-facing. A helical membrane pass occupies residues isoleucine 215–isoleucine 232. Over asparagine 233–leucine 252 the chain is Periplasmic. The chain crosses the membrane as a helical span at residues tryptophan 253–valine 281. The Cytoplasmic portion of the chain corresponds to alanine 282–aspartate 287. The chain crosses the membrane as a helical span at residues arginine 288–valine 309. Over proline 310–serine 329 the chain is Periplasmic. The next 2 helical transmembrane spans lie at isoleucine 330 to glycine 349 and glycine 355 to aspartate 376. Positions glycine 355–proline 359 match the Selectivity filter part_3 motif. Positions 356 and 357 each coordinate chloride. Topologically, residues methionine 377 to proline 386 are periplasmic. An intramembrane region (helical) is located at residues glycine 387–threonine 401. Residues valine 402–alanine 404 constitute an intramembrane region (note=Loop between two helices). The segment at residues proline 405–threonine 416 is an intramembrane region (helical). An intramembrane region (note=Loop between two helices) is located at residues asparagine 417–leucine 421. A helical transmembrane segment spans residues isoleucine 422–leucine 438. Residues leucine 439–alanine 468 are Cytoplasmic-facing. Residue tyrosine 445 participates in chloride binding.

It belongs to the chloride channel (TC 2.A.49) family. ClcA subfamily. Homodimer.

The protein resides in the cell inner membrane. The catalysed reaction is 2 chloride(in) + H(+)(out) = 2 chloride(out) + H(+)(in). Its function is as follows. Proton-coupled chloride transporter. Functions as antiport system and exchanges two chloride ions for 1 proton. Probably acts as an electrical shunt for an outwardly-directed proton pump that is linked to amino acid decarboxylation, as part of the extreme acid resistance (XAR) response. The chain is H(+)/Cl(-) exchange transporter ClcA from Vibrio campbellii (strain ATCC BAA-1116).